Here is a 138-residue protein sequence, read N- to C-terminus: Small ribosomal subunit protein uS11c (138 aa).

Residues 1–23 form a disordered region; the sequence is MAKPIQRIGSRRNGPIGSRKNGR.

The protein belongs to the universal ribosomal protein uS11 family. Part of the 30S ribosomal subunit.

It localises to the plastid. It is found in the chloroplast. In Platanus occidentalis (Sycamore), this protein is Small ribosomal subunit protein uS11c.